The primary structure comprises 142 residues: Ribosome-binding factor A (142 aa).

Positions 120-130 (EVRRDIDHAPA) are enriched in basic and acidic residues. The tract at residues 120 to 142 (EVRRDIDHAPAEDEFPTDGDDGQ) is disordered. Acidic residues predominate over residues 131 to 142 (EDEFPTDGDDGQ).

The protein belongs to the RbfA family. In terms of assembly, monomer. Binds 30S ribosomal subunits, but not 50S ribosomal subunits or 70S ribosomes.

Its subcellular location is the cytoplasm. Its function is as follows. One of several proteins that assist in the late maturation steps of the functional core of the 30S ribosomal subunit. Associates with free 30S ribosomal subunits (but not with 30S subunits that are part of 70S ribosomes or polysomes). Required for efficient processing of 16S rRNA. May interact with the 5'-terminal helix region of 16S rRNA. This Paramagnetospirillum magneticum (strain ATCC 700264 / AMB-1) (Magnetospirillum magneticum) protein is Ribosome-binding factor A.